The sequence spans 412 residues: MSQSKGMVVLAYSGGLDTSCILVWLKEQGYDVIAYLANIGQNEDFEAARKKAVNLGAKKVYIEDMRQQFVEEYIWPAVQANAIYEDRYLLGTSLARPCIAKKQVEIAKKEAAEYVSHGATGKGNDQIRFELTCYALYPEVKIIAPWRMPEFYNRFRGRSDLMEYAKKHNIPVPVTPKDPWSMDENIMHISYEGGILENPKNHAPPGLYLKTKNPATSPNEPDILEIEFKKGVPVKVTNTKEKTQHSSALGLFCYLNEVAGKHGVGRIDIVENRFIGMKSRGIYETPAGTILYQAHLDVEAFTMDREVRKIKQHLSQRFAEQIYNGFWYSPECEFVRSCITKSQEMVEGKVLVSVLKGQVYVLGREAPHSLYNEELVSMDVQGDYDPADACGFIRINALRLKEFHRLQKSKKN.

ATP-binding positions include 11–19 and A37; that span reads AYSGGLDTS. 2 residues coordinate L-citrulline: Y88 and S93. 116 to 124 is an ATP binding site; the sequence is SHGATGKGN. 3 residues coordinate L-aspartate: T120, N124, and D125. N124 serves as a coordination point for L-citrulline. R128, S181, S190, E271, and Y283 together coordinate L-citrulline.

Belongs to the argininosuccinate synthase family. In terms of assembly, homotetramer.

It is found in the cytoplasm. The protein localises to the cytosol. The catalysed reaction is L-citrulline + L-aspartate + ATP = 2-(N(omega)-L-arginino)succinate + AMP + diphosphate + H(+). It functions in the pathway amino-acid biosynthesis; L-arginine biosynthesis; L-arginine from L-ornithine and carbamoyl phosphate: step 2/3. It participates in nitrogen metabolism; urea cycle; (N(omega)-L-arginino)succinate from L-aspartate and L-citrulline: step 1/1. Functionally, one of the enzymes of the urea cycle, the metabolic pathway transforming neurotoxic amonia produced by protein catabolism into inocuous urea in the liver of ureotelic animals. Catalyzes the formation of arginosuccinate from aspartate, citrulline and ATP and together with ASL it is responsible for the biosynthesis of arginine in most body tissues. The protein is Argininosuccinate synthase of Xenopus tropicalis (Western clawed frog).